Here is a 662-residue protein sequence, read N- to C-terminus: ABC transporter G family member 25 (662 aa).

A disordered region spans residues Met-1 to Leu-30. Polar residues predominate over residues Asn-9–Leu-20. Residue Asn-56 is glycosylated (N-linked (GlcNAc...) asparagine). The 240-residue stretch at Gln-69–Phe-308 folds into the ABC transporter domain. Residue Gly-101–Ser-108 coordinates ATP. N-linked (GlcNAc...) asparagine glycosylation occurs at Asn-122. 7 consecutive transmembrane segments (helical) span residues Val-374–Leu-394, Phe-406–Trp-426, Leu-437–Phe-457, Leu-489–Leu-509, Val-522–Met-542, Ala-547–Asn-567, and Val-629–Tyr-649. One can recognise an ABC transmembrane type-2 domain in the interval Ser-388–Tyr-594.

Belongs to the ABC transporter superfamily. ABCG family. Eye pigment precursor importer (TC 3.A.1.204) subfamily. Mainly expressed in vascular tissues,predominantly in phloem companion cells, with highest levels in roots and seeds, and lower levels in seedlings, stems, leaves and flowers. Mostly observed in inflorescence meristems relative to cauline leaves and developing siliques. In seeds, mainly expressed in the endosperm and, to a lesser extent, in the embryo.

The protein resides in the cell membrane. It catalyses the reaction abscisate(in) + ATP + H2O = abscisate(out) + ADP + phosphate + H(+). Its activity is regulated as follows. ADP and vanadate (ABC transporters inhibitor) inhibit the ATP-dependent abscisic acid (ABA) uptake. Its function is as follows. High affinity abscisic acid (ABA) transporter that mediates the export of ABA, with a preference for (+)-ABA, through the plasma membrane, especially in vascular tissues (e.g. phloem companion cells), and is involved in the intercellular ABA signaling pathway. Together with ABCG31, export ABA from the endosperm to deliver it to the embryo via ABCG30 and ABCG40-mediated import to suppress radicle extension and subsequent embryonic growth. The protein is ABC transporter G family member 25 of Arabidopsis thaliana (Mouse-ear cress).